A 706-amino-acid polypeptide reads, in one-letter code: MSCVHNNTSFPVQIEAYLKEVFEKYKELQESKDTSLTARFARALKYYQFLIYTAFSDPKFGIGQGENTRGLLIYHQMGMGKTILSLSLAISLSHIYNPILIAPKSLHSNFQQSLLKLIKLLYPETTDPSKELQKISRRFRFVSLDAYNMGQQIIKAGGSLNGCLLIVDEAHNLFRGIINSANDKTNARQLYNNIMQAKNIRILFLTGTPCSKDPFEMVPCFNMLSGRILLPLHYERFYTAYVNKTTNSPLNADKLLNRLVGMISYAGNQNELNKLFPTELPLIIEKVEMSPEQYRQYLLARDVENAEKHASSGMHEKINTAALCLPGSEQESGSSYYVRSRMISIFASEMLTIKEDEKLSEAVQQLPKEAFTETSSPKIVCMLKNIKTSPGPVLIYSQFVELGLHVVARFLEIEGYQCLQPLKVLEEGHNAILLHKDGKDLMVKNFAEDEPTHTLVLSSKITRFTLITGKILSKERDMIQQLWNSPLNIHGEVIKILLVSKTGAEGLDLKYGRQVHILEPYWDKAREDQVKARIIRIGSHDALPPEEKTVQPFLYIAVANQKMFYSIPEGSQEQKTIDERFHERGLEKSHLNSAFRDLLKRAAIECAFNGESGCLMCQPTNALLFHENFERDLRLPNPCQPLVKTEVKAYSISYEGKQFFYQKNKGVGLGYTFYEYNPIIKAYIEIKPSNPLYIKLIKHVQAGTTV.

The Helicase ATP-binding domain maps to 62–227 (IGQGENTRGL…VPCFNMLSGR (166 aa)). Residue 75–82 (HQMGMGKT) participates in ATP binding. Residues 168–171 (DEAH) carry the DEAH box motif. Residues 378–599 (KIVCMLKNIK…HLNSAFRDLL (222 aa)) enclose the Helicase C-terminal domain.

It belongs to the DEAD box helicase family. DEAH subfamily. Part of the viral DNA-directed RNA polymerase that consists of 8 polII-like subunits (RPB1, RPB2, RPB3, RPB5, RPB6, RPB7, RPB9, RPB10), a capping enzyme and a termination factor.

Its subcellular location is the virion. In terms of biological role, putative DNA-dependent ATPase required for providing the needed energy to achieve the termination of early transcripts. This is Termination factor NPH-I homolog from African swine fever virus (isolate Pig/Kenya/KEN-50/1950) (ASFV).